The chain runs to 264 residues: uncharacterized protein (264 aa).

Transmembrane regions (helical) follow at residues 23-43, 59-79, 91-111, 150-170, 190-210, and 233-253; these read LIFL…TALI, FDTF…YYFL, LVLS…FYAL, FSEL…VGLL, AGIY…LNVW, and WIWS…LFVI.

Its subcellular location is the cell membrane. This is an uncharacterized protein from Mycoplasma genitalium (strain ATCC 33530 / DSM 19775 / NCTC 10195 / G37) (Mycoplasmoides genitalium).